A 444-amino-acid polypeptide reads, in one-letter code: sn-glycerol-3-phosphate-binding periplasmic protein UgpB (444 aa).

The first 30 residues, 1–30, serve as a signal peptide directing secretion; it reads MFNNTIRKTHAIRTAAACVAFALMSAGAQA. Positions 72, 96, 151, 277, 314, 353, and 404 each coordinate sn-glycerol 3-phosphate.

It belongs to the bacterial solute-binding protein 1 family. In terms of assembly, the complex is composed of two ATP-binding proteins (UgpC), two transmembrane proteins (UgpA and UgpE) and a solute-binding protein (UgpB).

The protein localises to the periplasm. In terms of biological role, part of the ABC transporter complex UgpBAEC involved in sn-glycerol-3-phosphate (G3P) import. Binds G3P. The chain is sn-glycerol-3-phosphate-binding periplasmic protein UgpB (ugpB) from Pectobacterium atrosepticum (strain SCRI 1043 / ATCC BAA-672) (Erwinia carotovora subsp. atroseptica).